The sequence spans 609 residues: Protein KINESIN LIGHT CHAIN-RELATED 1 (609 aa).

Positions 1 to 77 are disordered; sequence MPAMPGLVSV…TAAVIDVDDP (77 aa). Positions 38–55 are enriched in low complexity; sequence KKTPSSTPSRSKPSPNRS. TPR repeat units follow at residues 140 to 173, 183 to 216, 225 to 258, 267 to 301, 307 to 340, 349 to 382, 392 to 425, 433 to 466, 474 to 507, and 516 to 549; these read AMSLHVLAAIYCSLGRFDEAVPPLERAIQVPDPT, FSGHMQLGDTLSMLGQIDRSIACYEEGLKIQIQT, GETCRYLAEAYVQAMQFNKAEELCKKTLEIHRAH, AADRRLMAIICEAKGDYENALEHLVLASMAMIASG, ASIDVSIGNIYMSLCRFDEAVFSYQKALTVFKAS, ASVFVRLAELYHRTGKLRESKSYCENALRIYNKP, AGGLTEISAIYESVDEPEEALKLLQKSMKLLEDK, AGLEARMGVMYYTVGRYEDARNAFESAVTKLRAA, GVVLNQMGLACVQLFKIDEAGELFEEARGILEQE, and LGVYSNLAATYDAMGRIEDAIEILEQVLKLREEK. The segment at 582–609 is disordered; the sequence is LQNLIDPNARPPKKESSAKKWPSLGFKF.

This sequence belongs to the kinesin light chain family. As to quaternary structure, interacts with IQD1.

Its subcellular location is the cytoplasm. It localises to the cytoskeleton. This chain is Protein KINESIN LIGHT CHAIN-RELATED 1, found in Arabidopsis thaliana (Mouse-ear cress).